We begin with the raw amino-acid sequence, 137 residues long: MERTLSIIKPDAVAKNVIGKIIDRFETNGLRIAAMKKIQLSKNDAAKFYEVHKERPFFNDLVDYMTSGPVVVMVLEGENAVAKNRELMGATDPKEAKPGTIRADFAESIEANAVHGSDSLENAQKEIAFFFAQREIL.

Positions 9, 57, 85, 91, 102, and 112 each coordinate ATP. Histidine 115 (pros-phosphohistidine intermediate) is an active-site residue.

The protein belongs to the NDK family. Homotetramer. Mg(2+) is required as a cofactor.

Its subcellular location is the cytoplasm. The enzyme catalyses a 2'-deoxyribonucleoside 5'-diphosphate + ATP = a 2'-deoxyribonucleoside 5'-triphosphate + ADP. It catalyses the reaction a ribonucleoside 5'-diphosphate + ATP = a ribonucleoside 5'-triphosphate + ADP. Major role in the synthesis of nucleoside triphosphates other than ATP. The ATP gamma phosphate is transferred to the NDP beta phosphate via a ping-pong mechanism, using a phosphorylated active-site intermediate. The polypeptide is Nucleoside diphosphate kinase (Nitratiruptor sp. (strain SB155-2)).